The following is a 65-amino-acid chain: Small ribosomal subunit protein bS21B (65 aa).

It belongs to the bacterial ribosomal protein bS21 family.

This is Small ribosomal subunit protein bS21B from Francisella tularensis subsp. holarctica (strain LVS).